The following is a 281-amino-acid chain: MRGGAAGPTAGEPPGTEAEAEEVEESSAGDDEELELGLSLGSKKQQQQQHAPCRILTARDLQPAAALSPDSSVSSSSPAAAAAAGGKRAEGPTATTSPGTVASGHPHSSFGVVGWPPIRQFRMNSLFNQAKENTSETDTKKTATNESDVQKDKEEGEKKGRVAGWVKVNMDGEVIGRKVDLNAHRSYKTLALALELMFTKPSIGLCASHNTNSLKLLDNSAEYQLTYEDRDGDWMLVGDVPWEMFVSSVKRLRIMRTSDANGLGQRYQGIHRTIASTRGRS.

Disordered stretches follow at residues 1 to 115 (MRGG…VVGW) and 130 to 157 (AKEN…EEGE). The span at 7-17 (GPTAGEPPGTE) shows a compositional bias: low complexity. A compositionally biased stretch (acidic residues) spans 18–35 (AEAEEVEESSAGDDEELE). An EAR-like (transcriptional repression) motif is present at residues 36 to 40 (LGLSL). 2 stretches are compositionally biased toward low complexity: residues 36 to 49 (LGLS…QQQQ) and 63 to 84 (PAAA…AAAA). Residues 133 to 157 (NTSETDTKKTATNESDVQKDKEEGE) show a composition bias toward basic and acidic residues. The region spanning 163–259 (AGWVKVNMDG…KRLRIMRTSD (97 aa)) is the PB1 domain.

This sequence belongs to the Aux/IAA family. In terms of assembly, homodimers and heterodimers. As to expression, highly expressed in flowers. Expressed in shoots.

It localises to the nucleus. Functionally, aux/IAA proteins are short-lived transcriptional factors that function as repressors of early auxin response genes at low auxin concentrations. This Oryza sativa subsp. indica (Rice) protein is Auxin-responsive protein IAA10 (IAA10).